The chain runs to 202 residues: D-alanyl-D-alanine dipeptidase (202 aa).

Positions 116 and 123 each coordinate Zn(2+). The active-site Proton donor/acceptor is glutamate 181. Zn(2+) is bound at residue histidine 184.

The protein belongs to the peptidase M15D family. The cofactor is Zn(2+).

The enzyme catalyses D-alanyl-D-alanine + H2O = 2 D-alanine. In terms of biological role, catalyzes hydrolysis of the D-alanyl-D-alanine dipeptide. May play a role in immunity or defense against glycopeptide antibiotics (perhaps at a moderate level) in the soil environment. Might confer vancomycin resistance to S.coelicolor. This chain is D-alanyl-D-alanine dipeptidase (vanX), found in Streptomyces coelicolor (strain ATCC BAA-471 / A3(2) / M145).